The chain runs to 439 residues: MSIDINWEAATSGPDGEALAERIRSFIHDKFQQIALPRFIRSVEVNSFDFGTVRPQLQIKDLCDPFEDFYEEDEGDEDFSDDQDGAPKHPPTIATERSGAGTWQAEHPSFVAGRLPGGIESRDIPAPSKEDLLASRPMRSPMSFGESLNPYFFPRAGTPGIPGGTSNLGYYMPLGGMSGTQTPLASVPRGPFSPGLRDSSVYGDIHNPPARDYPRPVHRQTDTDIDSGHSRPSTADTLNSINSQRISNPALSHPHSSNESHPDTRDHSPPPRRMHEKKPDDLQVLCQLRYNGNIRLSLTAQVLLDYPMPSFVGLPLKLNITGLSFDGVAVVAYIRKRVHFCFLSPEDADTLLGSEESNETGYIPGINPIGGGASGGAASSRRRDDSLLRDVRVESEIGRKEDGKPVLKNVGKVEKFVLEQVRRIFEEEFVYPSFWTFLV.

One can recognise an SMP-LTD domain in the interval Met-1–Val-439. Residues Glu-71–Asp-84 are compositionally biased toward acidic residues. Disordered regions lie at residues Glu-71–Gln-104, Thr-182–Lys-278, and Tyr-362–Asp-385. Positions Asp-212–His-229 are enriched in basic and acidic residues. Over residues Ser-230–His-255 the composition is skewed to polar residues. The segment covering Ser-256 to Pro-269 has biased composition (basic and acidic residues).

Belongs to the MDM12 family. As to quaternary structure, component of the ER-mitochondria encounter structure (ERMES) or MDM complex, composed of MMM1, MDM10, MDM12 and MDM34. An MMM1 homodimer associates with one molecule of MDM12 on each side in a pairwise head-to-tail manner, and the SMP-LTD domains of MMM1 and MDM12 generate a continuous hydrophobic tunnel for phospholipid trafficking.

The protein localises to the mitochondrion outer membrane. Its subcellular location is the endoplasmic reticulum membrane. Functionally, component of the ERMES/MDM complex, which serves as a molecular tether to connect the endoplasmic reticulum (ER) and mitochondria. Components of this complex are involved in the control of mitochondrial shape and protein biogenesis, and function in nonvesicular lipid trafficking between the ER and mitochondria. MDM12 is required for the interaction of the ER-resident membrane protein MMM1 and the outer mitochondrial membrane-resident beta-barrel protein MDM10. The MDM12-MMM1 subcomplex functions in the major beta-barrel assembly pathway that is responsible for biogenesis of all mitochondrial outer membrane beta-barrel proteins, and acts in a late step after the SAM complex. The MDM10-MDM12-MMM1 subcomplex further acts in the TOM40-specific pathway after the action of the MDM12-MMM1 complex. Essential for establishing and maintaining the structure of mitochondria and maintenance of mtDNA nucleoids. This is Mitochondrial distribution and morphology protein 12 from Uncinocarpus reesii (strain UAMH 1704).